Here is a 1043-residue protein sequence, read N- to C-terminus: Unconventional myosin-Ia (1043 aa).

The 687-residue stretch at 8-694 (VGVEDLVLLE…TLFYLEEQRR (687 aa)) folds into the Myosin motor domain. Residue 101–108 (GESGAGKT) coordinates ATP. Positions 571 to 593 (VTTLMKNLYSKNPNYIRCIKPNE) are actin-binding. 3 consecutive IQ domains span residues 697–719 (LQQLATLIQKTYRGWRCRTHYQL), 720–742 (MRKSQIVISSWFRGNMQKKHYRK), and 743–772 (MKASALLIQAFVRGWKARKNYRKYFRSGAA). One can recognise a TH1 domain in the interval 858 to 1042 (KASYPQSVPI…KGSRCLEVTV (185 aa)).

The protein belongs to the TRAFAC class myosin-kinesin ATPase superfamily. Myosin family. Post-translationally, phosphorylated by ALPK1.

In terms of biological role, involved in directing the movement of organelles along actin filaments. This Bos taurus (Bovine) protein is Unconventional myosin-Ia (MYO1A).